The primary structure comprises 263 residues: Ribonuclease HII (263 aa).

The region spanning 71-262 (QAIAGIDEVG…VKSMCCDSTN (192 aa)) is the RNase H type-2 domain. Residues aspartate 77, glutamate 78, and aspartate 172 each coordinate a divalent metal cation.

It belongs to the RNase HII family. Mn(2+) serves as cofactor. The cofactor is Mg(2+).

The protein resides in the cytoplasm. It carries out the reaction Endonucleolytic cleavage to 5'-phosphomonoester.. Its function is as follows. Endonuclease that specifically degrades the RNA of RNA-DNA hybrids. This is Ribonuclease HII from Streptococcus pyogenes serotype M5 (strain Manfredo).